Reading from the N-terminus, the 424-residue chain is uncharacterized protein (424 aa).

This sequence belongs to the serpin family.

This is an uncharacterized protein from Methanosarcina acetivorans (strain ATCC 35395 / DSM 2834 / JCM 12185 / C2A).